Reading from the N-terminus, the 136-residue chain is Large ribosomal subunit protein uL16c (136 aa).

This sequence belongs to the universal ribosomal protein uL16 family. As to quaternary structure, part of the 50S ribosomal subunit.

Its subcellular location is the plastid. The protein resides in the chloroplast. The polypeptide is Large ribosomal subunit protein uL16c (Phaseolus angularis (Azuki bean)).